The primary structure comprises 63 residues: Conotoxin PnMRCL-0111 (63 aa).

Positions 1–19 (MRCLPVFIVLLLLIVSAPG) are cleaved as a signal peptide. The propeptide occupies 20–49 (FDARPKTEDDVPLSSFHDDLQRTVRTLLDI). A Tryptophan amide modification is found at tryptophan 62.

The protein belongs to the conotoxin T superfamily. Contains 2 disulfide bonds that can be either 'C1-C3, C2-C4' or 'C1-C4, C2-C3', since these disulfide connectivities have been observed for conotoxins with cysteine framework V (for examples, see AC P0DQQ7 and AC P81755). In terms of tissue distribution, expressed by the venom duct.

The protein localises to the secreted. The polypeptide is Conotoxin PnMRCL-0111 (Conus pennaceus (Feathered cone)).